The sequence spans 494 residues: MANYFNTLNLREQLDQLGRCRFMDRSEFATEADYLKGKKVVIVGCGAQGLNQGLNMRDSGLDVAYALRQAAIDEQRQSYKNAKENGFEVGSYETLIPQADLVVNLTPDKQHTNVVETVMPLMKEGAALGYSHGFNVVEEGMQIRKDLTVVMVAPKCPGTEVREEYKRGFGVPTLIAVHPENDPKGEGWDIAKAWAAATGGHRAGCLESSFVAEVKSDLMGEQTILCGMLQAGSIVCYEKMVAEGIDPGYAGKLLQYGWETITEALKFGGITHMMDRLSNPAKIKAFELSEELKDLMRPLYNKHMDDIISGHFSSTMMADWANDDANLLGWRAETGETAFENYPSTDVEISEQEYFDNGILMVAMVRAGVELAFEAMTASGIIDESAYYESLHELPLIANTIARKRLYEMNVVISDTAEYGNYLFANVATPLLREKFMPSVGTDVIGKGLGETSNQVDNATLIAVNETIRNHPVEYIGEELRGYMTDMKRIAVGG.

Residues 14–208 (LDQLGRCRFM…GGHRAGCLES (195 aa)) enclose the KARI N-terminal Rossmann domain. Residues 45 to 48 (CGAQ), Arg68, Arg76, Ser78, and 108 to 110 (DKQ) contribute to the NADP(+) site. Residue His132 is part of the active site. Gly158 lines the NADP(+) pocket. KARI C-terminal knotted domains follow at residues 209–344 (SFVA…NYPS) and 345–487 (TDVE…MTDM). 4 residues coordinate Mg(2+): Asp217, Glu221, Glu389, and Glu393. Ser414 lines the substrate pocket.

It belongs to the ketol-acid reductoisomerase family. Mg(2+) serves as cofactor.

It catalyses the reaction (2R)-2,3-dihydroxy-3-methylbutanoate + NADP(+) = (2S)-2-acetolactate + NADPH + H(+). The enzyme catalyses (2R,3R)-2,3-dihydroxy-3-methylpentanoate + NADP(+) = (S)-2-ethyl-2-hydroxy-3-oxobutanoate + NADPH + H(+). It participates in amino-acid biosynthesis; L-isoleucine biosynthesis; L-isoleucine from 2-oxobutanoate: step 2/4. The protein operates within amino-acid biosynthesis; L-valine biosynthesis; L-valine from pyruvate: step 2/4. Involved in the biosynthesis of branched-chain amino acids (BCAA). Catalyzes an alkyl-migration followed by a ketol-acid reduction of (S)-2-acetolactate (S2AL) to yield (R)-2,3-dihydroxy-isovalerate. In the isomerase reaction, S2AL is rearranged via a Mg-dependent methyl migration to produce 3-hydroxy-3-methyl-2-ketobutyrate (HMKB). In the reductase reaction, this 2-ketoacid undergoes a metal-dependent reduction by NADPH to yield (R)-2,3-dihydroxy-isovalerate. The chain is Ketol-acid reductoisomerase (NADP(+)) from Vibrio vulnificus (strain CMCP6).